Consider the following 189-residue polypeptide: Sec-independent protein translocase protein TatB (189 aa).

The chain crosses the membrane as a helical span at residues 1–21 (MFGVGIFEVLVILIVAVIALG). The interval 152 to 189 (TQKPQNSIDSINSKESSVDSLHSPSIVESTQSSSSKDS) is disordered. Polar residues predominate over residues 153–189 (QKPQNSIDSINSKESSVDSLHSPSIVESTQSSSSKDS).

This sequence belongs to the TatB family. As to quaternary structure, the Tat system comprises two distinct complexes: a TatABC complex, containing multiple copies of TatA, TatB and TatC subunits, and a separate TatA complex, containing only TatA subunits. Substrates initially bind to the TatABC complex, which probably triggers association of the separate TatA complex to form the active translocon.

Its subcellular location is the cell inner membrane. Part of the twin-arginine translocation (Tat) system that transports large folded proteins containing a characteristic twin-arginine motif in their signal peptide across membranes. Together with TatC, TatB is part of a receptor directly interacting with Tat signal peptides. TatB may form an oligomeric binding site that transiently accommodates folded Tat precursor proteins before their translocation. This chain is Sec-independent protein translocase protein TatB, found in Helicobacter hepaticus (strain ATCC 51449 / 3B1).